The sequence spans 480 residues: ATP synthase subunit beta (480 aa).

An ATP-binding site is contributed by 154-161 (GGAGVGKT).

The protein belongs to the ATPase alpha/beta chains family. As to quaternary structure, F-type ATPases have 2 components, CF(1) - the catalytic core - and CF(0) - the membrane proton channel. CF(1) has five subunits: alpha(3), beta(3), gamma(1), delta(1), epsilon(1). CF(0) has four main subunits: a(1), b(1), b'(1) and c(9-12).

It localises to the cell inner membrane. The catalysed reaction is ATP + H2O + 4 H(+)(in) = ADP + phosphate + 5 H(+)(out). Its function is as follows. Produces ATP from ADP in the presence of a proton gradient across the membrane. The catalytic sites are hosted primarily by the beta subunits. This chain is ATP synthase subunit beta, found in Bradyrhizobium sp. (strain ORS 278).